Here is a 509-residue protein sequence, read N- to C-terminus: Citrinin biosynthesis transcriptional activator mrl3 (509 aa).

Residues 1–22 form a disordered region; sequence MASTAHRQPSRPTTRQRQRTGR. The zn(2)-C6 fungal-type DNA-binding region spans 24-51; that stretch reads CEECRRRKLRCDGQQPRCGVCVDSGVTC. Residues 97-143 form a disordered region; it reads STPLTNDHHDGCSVSSASSRSDSNPPPTVSEPDMSLPNTTTSVSSAP. A compositionally biased stretch (low complexity) spans 109–119; sequence SVSSASSRSDS. Residues 132-143 are compositionally biased toward polar residues; it reads LPNTTTSVSSAP.

The protein localises to the nucleus. In terms of biological role, transcription factor that regulates the expression of the gene cluster that mediates the biosynthesis of the mycotoxin citrinin, a hepato-nephrotoxic compound to humans due to inhibition of respiration complex III. The protein is Citrinin biosynthesis transcriptional activator mrl3 of Monascus ruber (Mold).